We begin with the raw amino-acid sequence, 530 residues long: Lysine--tRNA ligase (530 aa).

A 'HIGH' region motif is present at residues 28–36 (PSGHIHVGN). A 'KMSKS' region motif is present at residues 278-282 (PMSSS).

This sequence belongs to the class-I aminoacyl-tRNA synthetase family.

The protein localises to the cytoplasm. It carries out the reaction tRNA(Lys) + L-lysine + ATP = L-lysyl-tRNA(Lys) + AMP + diphosphate. The chain is Lysine--tRNA ligase (lysS) from Methanocaldococcus jannaschii (strain ATCC 43067 / DSM 2661 / JAL-1 / JCM 10045 / NBRC 100440) (Methanococcus jannaschii).